Consider the following 1211-residue polypeptide: DNA-directed RNA polymerase subunit beta' (1211 aa).

Zn(2+)-binding residues include Cys60, Cys62, Cys75, and Cys78. The Mg(2+) site is built by Asp449, Asp451, and Asp453. Positions 818, 892, 899, and 902 each coordinate Zn(2+).

This sequence belongs to the RNA polymerase beta' chain family. As to quaternary structure, the RNAP catalytic core consists of 2 alpha, 1 beta, 1 beta' and 1 omega subunit. When a sigma factor is associated with the core the holoenzyme is formed, which can initiate transcription. The cofactor is Mg(2+). Requires Zn(2+) as cofactor.

The enzyme catalyses RNA(n) + a ribonucleoside 5'-triphosphate = RNA(n+1) + diphosphate. Its function is as follows. DNA-dependent RNA polymerase catalyzes the transcription of DNA into RNA using the four ribonucleoside triphosphates as substrates. This Limosilactobacillus reuteri (strain DSM 20016) (Lactobacillus reuteri) protein is DNA-directed RNA polymerase subunit beta'.